The primary structure comprises 90 residues: Probable Fe(2+)-trafficking protein (90 aa).

Belongs to the Fe(2+)-trafficking protein family.

In terms of biological role, could be a mediator in iron transactions between iron acquisition and iron-requiring processes, such as synthesis and/or repair of Fe-S clusters in biosynthetic enzymes. The protein is Probable Fe(2+)-trafficking protein of Stutzerimonas stutzeri (strain A1501) (Pseudomonas stutzeri).